Reading from the N-terminus, the 146-residue chain is Large ribosomal subunit protein uL15 (146 aa).

Positions 1 to 66 (MKLHELKPAP…LQRRMPKRGF (66 aa)) are disordered. Composition is skewed to gly residues over residues 21–31 (QGIGSGMGKTA) and 42–52 (SGGGVRPGFEG).

The protein belongs to the universal ribosomal protein uL15 family. In terms of assembly, part of the 50S ribosomal subunit.

Its function is as follows. Binds to the 23S rRNA. This chain is Large ribosomal subunit protein uL15, found in Pelotomaculum thermopropionicum (strain DSM 13744 / JCM 10971 / SI).